The primary structure comprises 122 residues: Large ribosomal subunit protein uL14c (122 aa).

This sequence belongs to the universal ribosomal protein uL14 family. Part of the 50S ribosomal subunit.

It localises to the plastid. The protein resides in the chloroplast. Functionally, binds to 23S rRNA. This chain is Large ribosomal subunit protein uL14c, found in Psilotum nudum (Whisk fern).